The chain runs to 907 residues: DNA mismatch repair protein MutS (907 aa).

An ATP-binding site is contributed by 656-663 (GPNMAGKS).

Belongs to the DNA mismatch repair MutS family.

This protein is involved in the repair of mismatches in DNA. It is possible that it carries out the mismatch recognition step. This protein has a weak ATPase activity. In Nitrobacter hamburgensis (strain DSM 10229 / NCIMB 13809 / X14), this protein is DNA mismatch repair protein MutS.